A 109-amino-acid chain; its full sequence is Large ribosomal subunit protein uL22 (109 aa).

Belongs to the universal ribosomal protein uL22 family. In terms of assembly, part of the 50S ribosomal subunit.

Its function is as follows. This protein binds specifically to 23S rRNA; its binding is stimulated by other ribosomal proteins, e.g. L4, L17, and L20. It is important during the early stages of 50S assembly. It makes multiple contacts with different domains of the 23S rRNA in the assembled 50S subunit and ribosome. Functionally, the globular domain of the protein is located near the polypeptide exit tunnel on the outside of the subunit, while an extended beta-hairpin is found that lines the wall of the exit tunnel in the center of the 70S ribosome. The chain is Large ribosomal subunit protein uL22 from Polaromonas naphthalenivorans (strain CJ2).